A 264-amino-acid polypeptide reads, in one-letter code: S-adenosylmethionine decarboxylase proenzyme (264 aa).

Catalysis depends on S113, which acts as the Schiff-base intermediate with substrate; via pyruvic acid. Residue S113 is modified to Pyruvic acid (Ser); by autocatalysis. H118 acts as the Proton acceptor; for processing activity in catalysis. The active-site Proton donor; for catalytic activity is the C141.

Belongs to the prokaryotic AdoMetDC family. Type 2 subfamily. As to quaternary structure, heterooctamer of four alpha and four beta chains arranged as a tetramer of alpha/beta heterodimers. Pyruvate is required as a cofactor. In terms of processing, is synthesized initially as an inactive proenzyme. Formation of the active enzyme involves a self-maturation process in which the active site pyruvoyl group is generated from an internal serine residue via an autocatalytic post-translational modification. Two non-identical subunits are generated from the proenzyme in this reaction, and the pyruvate is formed at the N-terminus of the alpha chain, which is derived from the carboxyl end of the proenzyme. The post-translation cleavage follows an unusual pathway, termed non-hydrolytic serinolysis, in which the side chain hydroxyl group of the serine supplies its oxygen atom to form the C-terminus of the beta chain, while the remainder of the serine residue undergoes an oxidative deamination to produce ammonia and the pyruvoyl group blocking the N-terminus of the alpha chain.

The catalysed reaction is S-adenosyl-L-methionine + H(+) = S-adenosyl 3-(methylsulfanyl)propylamine + CO2. It functions in the pathway amine and polyamine biosynthesis; S-adenosylmethioninamine biosynthesis; S-adenosylmethioninamine from S-adenosyl-L-methionine: step 1/1. Its function is as follows. Catalyzes the decarboxylation of S-adenosylmethionine to S-adenosylmethioninamine (dcAdoMet), the propylamine donor required for the synthesis of the polyamines spermine and spermidine from the diamine putrescine. The protein is S-adenosylmethionine decarboxylase proenzyme of Stenotrophomonas maltophilia (strain K279a).